A 254-amino-acid chain; its full sequence is Type III pantothenate kinase (254 aa).

Position 6–13 (6–13 (DVGNSNIV)) interacts with ATP. Substrate contacts are provided by residues Y100 and 107–110 (GADR). Residue D109 is the Proton acceptor of the active site. Residue D129 coordinates K(+). T132 serves as a coordination point for ATP. Substrate is bound at residue T184.

The protein belongs to the type III pantothenate kinase family. Homodimer. NH4(+) is required as a cofactor. K(+) serves as cofactor.

It localises to the cytoplasm. The catalysed reaction is (R)-pantothenate + ATP = (R)-4'-phosphopantothenate + ADP + H(+). It participates in cofactor biosynthesis; coenzyme A biosynthesis; CoA from (R)-pantothenate: step 1/5. Catalyzes the phosphorylation of pantothenate (Pan), the first step in CoA biosynthesis. The sequence is that of Type III pantothenate kinase from Geobacter sp. (strain M21).